The primary structure comprises 842 residues: Alanine--tRNA ligase (842 aa).

4 residues coordinate Zn(2+): His-549, His-553, Cys-650, and His-654.

The protein belongs to the class-II aminoacyl-tRNA synthetase family. Requires Zn(2+) as cofactor.

The protein resides in the cytoplasm. It catalyses the reaction tRNA(Ala) + L-alanine + ATP = L-alanyl-tRNA(Ala) + AMP + diphosphate. Functionally, catalyzes the attachment of alanine to tRNA(Ala) in a two-step reaction: alanine is first activated by ATP to form Ala-AMP and then transferred to the acceptor end of tRNA(Ala). Also edits incorrectly charged Ser-tRNA(Ala) and Gly-tRNA(Ala) via its editing domain. In Campylobacter jejuni subsp. jejuni serotype O:6 (strain 81116 / NCTC 11828), this protein is Alanine--tRNA ligase.